The sequence spans 497 residues: Glycerol kinase (497 aa).

Thr11 contacts ADP. The ATP site is built by Thr11, Ser12, and Ser13. A sn-glycerol 3-phosphate-binding site is contributed by Thr11. Arg15 provides a ligand contact to ADP. Arg81, Glu82, Tyr133, and Asp242 together coordinate sn-glycerol 3-phosphate. Arg81, Glu82, Tyr133, Asp242, and Gln243 together coordinate glycerol. Residues Thr264 and Gly307 each contribute to the ADP site. The ATP site is built by Thr264, Gly307, Gln311, and Gly412. Positions 412 and 416 each coordinate ADP.

It belongs to the FGGY kinase family.

The catalysed reaction is glycerol + ATP = sn-glycerol 3-phosphate + ADP + H(+). It functions in the pathway polyol metabolism; glycerol degradation via glycerol kinase pathway; sn-glycerol 3-phosphate from glycerol: step 1/1. Its activity is regulated as follows. Inhibited by fructose 1,6-bisphosphate (FBP). Functionally, key enzyme in the regulation of glycerol uptake and metabolism. Catalyzes the phosphorylation of glycerol to yield sn-glycerol 3-phosphate. In Polaromonas sp. (strain JS666 / ATCC BAA-500), this protein is Glycerol kinase.